Reading from the N-terminus, the 718-residue chain is Exostosin-2 (718 aa).

The Cytoplasmic segment spans residues 1–25 (MCASVKYNIRGPALIPRMKTKHRIY). Residues 26-46 (YITLFSIVLLGLIATGMFQFW) form a helical; Signal-anchor for type II membrane protein membrane-spanning segment. The Lumenal segment spans residues 47-718 (PHSIESSNDW…LKSFPNIGSL (672 aa)). Disulfide bonds link C85/C90, C96/C151, C286/C300, and C318/C339. The N-linked (GlcNAc...) asparagine glycan is linked to N288. L461, R465, N490, and N517 together coordinate UDP. UDP-N-acetyl-alpha-D-glucosamine contacts are provided by R465, N490, N517, R522, D538, D539, and D540. Residues D538 and D539 each contribute to the UDP site. D540 contacts Mn(2+). A protein contacts are provided by Y582 and S584. C626 and C676 are disulfide-bonded. UDP-N-acetyl-alpha-D-glucosamine-binding residues include E627 and D628. Residue N637 is glycosylated (N-linked (GlcNAc...) asparagine). The a protein site is built by K651 and K653. R673 provides a ligand contact to UDP-N-acetyl-alpha-D-glucosamine.

This sequence belongs to the glycosyltransferase 47 family. As to quaternary structure, part of the heparan sulfate polymerase, a dimeric complex composed of EXT1 and EXT2. Could also form homooligomeric complexes. Interacts with NDST1. Interacts with GALNT5. Mn(2+) is required as a cofactor. In terms of processing, N-glycosylated at Asn-637. Post-translationally, a soluble form is generated by proteolytic processing. In terms of tissue distribution, widely expressed.

The protein localises to the golgi apparatus membrane. It is found in the golgi apparatus. It localises to the cis-Golgi network membrane. Its subcellular location is the endoplasmic reticulum membrane. The protein resides in the secreted. It catalyses the reaction 3-O-{[(1-&gt;4)-beta-D-GlcA-(1-&gt;4)-alpha-D-GlcNAc](n)-(1-&gt;4)-beta-D-GlcA-(1-&gt;3)-beta-D-Gal-(1-&gt;3)-beta-D-Gal-(1-&gt;4)-beta-D-Xyl}-L-seryl-[protein] + UDP-N-acetyl-alpha-D-glucosamine = 3-O-{alpha-D-GlcNAc-[(1-&gt;4)-beta-D-GlcA-(1-&gt;4)-alpha-D-GlcNAc](n)-(1-&gt;4)-beta-D-GlcA-(1-&gt;3)-beta-D-Gal-(1-&gt;3)-beta-D-Gal-(1-&gt;4)-beta-D-Xyl}-L-seryl-[protein] + UDP + H(+). It functions in the pathway protein modification; protein glycosylation. In terms of biological role, glycosyltransferase forming with EXT1 the heterodimeric heparan sulfate polymerase which catalyzes the elongation of the heparan sulfate glycan backbone. Glycan backbone extension consists in the alternating transfer of (1-&gt;4)-beta-D-GlcA and (1-&gt;4)-alpha-D-GlcNAc residues from their respective UDP-sugar donors. Both EXT1 and EXT2 are required for the full activity of the polymerase since EXT1 bears the N-acetylglucosaminyl-proteoglycan 4-beta-glucuronosyltransferase activity within the complex while EXT2 carries the glucuronosyl-N-acetylglucosaminyl-proteoglycan 4-alpha-N-acetylglucosaminyltransferase activity. Heparan sulfate proteoglycans are ubiquitous components of the extracellular matrix and play an important role in tissue homeostasis and signaling. In Homo sapiens (Human), this protein is Exostosin-2.